A 282-amino-acid chain; its full sequence is Shikimate dehydrogenase (NADP(+)) (282 aa).

Shikimate is bound by residues 19 to 21 and T66; that span reads SFS. The active-site Proton acceptor is the K70. 2 residues coordinate shikimate: N91 and D106. Residues 130 to 134, 152 to 157, T196, M200, and L224 contribute to the NADP(+) site; these read GAGGA and NRTVEK. Y226 contributes to the shikimate binding site. Position 247 (G247) interacts with NADP(+).

This sequence belongs to the shikimate dehydrogenase family. As to quaternary structure, homodimer.

The enzyme catalyses shikimate + NADP(+) = 3-dehydroshikimate + NADPH + H(+). The protein operates within metabolic intermediate biosynthesis; chorismate biosynthesis; chorismate from D-erythrose 4-phosphate and phosphoenolpyruvate: step 4/7. Its function is as follows. Involved in the biosynthesis of the chorismate, which leads to the biosynthesis of aromatic amino acids. Catalyzes the reversible NADPH linked reduction of 3-dehydroshikimate (DHSA) to yield shikimate (SA). This chain is Shikimate dehydrogenase (NADP(+)), found in Methanocaldococcus jannaschii (strain ATCC 43067 / DSM 2661 / JAL-1 / JCM 10045 / NBRC 100440) (Methanococcus jannaschii).